The chain runs to 169 residues: Mediator of RNA polymerase II transcription subunit 28 (169 aa).

The tract at residues 1–35 (MFSAQQPGPPPPNQPGAPAGLMSTPPGAKNPSSTL) is disordered. Positions 99 to 137 (EQVIKEDVSELRNELQRKEALIQKHLTKLRSWQQVLEEI) form a coiled coil.

Belongs to the Mediator complex subunit 28 family. Component of the Mediator complex.

It is found in the nucleus. Component of the Mediator complex, a coactivator involved in the regulated transcription of nearly all RNA polymerase II-dependent genes. Mediator functions as a bridge to convey information from gene-specific regulatory proteins to the basal RNA polymerase II transcription machinery. Mediator is recruited to promoters by direct interactions with regulatory proteins and serves as a scaffold for the assembly of a functional preinitiation complex with RNA polymerase II and the general transcription factors. The sequence is that of Mediator of RNA polymerase II transcription subunit 28 (med28) from Xenopus tropicalis (Western clawed frog).